Consider the following 416-residue polypeptide: Formyl-CoA:oxalate CoA-transferase (416 aa).

Residues 17 to 18 (QS), Arg-38, 72 to 75 (LNTK), 96 to 98 (NFH), His-104, and 137 to 140 (KAYE) each bind CoA. Asp-169 functions as the Nucleophile in the catalytic mechanism. Residue 248 to 250 (GGQ) coordinates substrate. CoA is bound at residue 273-275 (QEQ).

Belongs to the CoA-transferase III family. Frc subfamily. As to quaternary structure, homodimer.

The enzyme catalyses formyl-CoA + oxalate = oxalyl-CoA + formate. The protein operates within metabolic intermediate degradation; oxalate degradation; CO(2) and formate from oxalate: step 1/2. Involved in the catabolism of oxalate and in the adapatation to low pH via the induction of the oxalate-dependent acid tolerance response (ATR). Catalyzes the transfer of the CoA moiety from formyl-CoA to oxalate. The protein is Formyl-CoA:oxalate CoA-transferase of Shigella boydii serotype 18 (strain CDC 3083-94 / BS512).